Here is a 97-residue protein sequence, read N- to C-terminus: Co-chaperonin GroES (97 aa).

The protein belongs to the GroES chaperonin family. Heptamer of 7 subunits arranged in a ring. Interacts with the chaperonin GroEL.

The protein localises to the cytoplasm. In terms of biological role, together with the chaperonin GroEL, plays an essential role in assisting protein folding. The GroEL-GroES system forms a nano-cage that allows encapsulation of the non-native substrate proteins and provides a physical environment optimized to promote and accelerate protein folding. GroES binds to the apical surface of the GroEL ring, thereby capping the opening of the GroEL channel. The chain is Co-chaperonin GroES from Photorhabdus laumondii subsp. laumondii (strain DSM 15139 / CIP 105565 / TT01) (Photorhabdus luminescens subsp. laumondii).